The sequence spans 438 residues: Exoglucanase 3 (438 aa).

A signal peptide spans 1–20; the sequence is MFKFAALLALASLVPGFVQA. One can recognise a CBM1 domain in the interval 21-59; sequence QSPVWGQCGGNGWTGPTTCASGSTCVKQNDFYSQCLPNN. 2 disulfide bridges follow: C28–C45 and C39–C55. The interval 57–90 is disordered; that stretch reads PNNQAPPSTTTQPGTTPPATTTSGGTGPTSGAGN. Residues 60 to 87 form a linker region; the sequence is QAPPSTTTQPGTTPPATTTSGGTGPTSG. Residues 61 to 79 show a composition bias toward low complexity; the sequence is APPSTTTQPGTTPPATTTS. The catalytic stretch occupies residues 88–438; the sequence is AGNPYTGKTV…TLVANANPAL (351 aa). Disulfide bonds link C170/C229 and C360/C407. D215 acts as the Proton donor in catalysis. D393 (nucleophile) is an active-site residue.

Belongs to the glycosyl hydrolase 6 (cellulase B) family.

It carries out the reaction Hydrolysis of (1-&gt;4)-beta-D-glucosidic linkages in cellulose and cellotetraose, releasing cellobiose from the non-reducing ends of the chains.. Functionally, shows enzymatic activity towards crystalline cellulose. At long reaction times. It is also able to degrade carboxymethyl cellulose and barley B-glucan. This is Exoglucanase 3 (cel3) from Agaricus bisporus (White button mushroom).